A 201-amino-acid chain; its full sequence is FMN-dependent NADH:quinone oxidoreductase (201 aa).

Residues Ser9 and 16–18 contribute to the FMN site; that span reads SYS.

The protein belongs to the azoreductase type 1 family. In terms of assembly, homodimer. FMN is required as a cofactor.

The enzyme catalyses 2 a quinone + NADH + H(+) = 2 a 1,4-benzosemiquinone + NAD(+). It carries out the reaction N,N-dimethyl-1,4-phenylenediamine + anthranilate + 2 NAD(+) = 2-(4-dimethylaminophenyl)diazenylbenzoate + 2 NADH + 2 H(+). Functionally, quinone reductase that provides resistance to thiol-specific stress caused by electrophilic quinones. Its function is as follows. Also exhibits azoreductase activity. Catalyzes the reductive cleavage of the azo bond in aromatic azo compounds to the corresponding amines. This chain is FMN-dependent NADH:quinone oxidoreductase, found in Mesomycoplasma hyopneumoniae (strain 232) (Mycoplasma hyopneumoniae).